A 95-amino-acid polypeptide reads, in one-letter code: Aspartyl/glutamyl-tRNA(Asn/Gln) amidotransferase subunit C (95 aa).

It belongs to the GatC family. Heterotrimer of A, B and C subunits.

The catalysed reaction is L-glutamyl-tRNA(Gln) + L-glutamine + ATP + H2O = L-glutaminyl-tRNA(Gln) + L-glutamate + ADP + phosphate + H(+). It carries out the reaction L-aspartyl-tRNA(Asn) + L-glutamine + ATP + H2O = L-asparaginyl-tRNA(Asn) + L-glutamate + ADP + phosphate + 2 H(+). Functionally, allows the formation of correctly charged Asn-tRNA(Asn) or Gln-tRNA(Gln) through the transamidation of misacylated Asp-tRNA(Asn) or Glu-tRNA(Gln) in organisms which lack either or both of asparaginyl-tRNA or glutaminyl-tRNA synthetases. The reaction takes place in the presence of glutamine and ATP through an activated phospho-Asp-tRNA(Asn) or phospho-Glu-tRNA(Gln). In Rhizobium etli (strain CIAT 652), this protein is Aspartyl/glutamyl-tRNA(Asn/Gln) amidotransferase subunit C.